A 237-amino-acid chain; its full sequence is Phosphoribosylaminoimidazole-succinocarboxamide synthase (237 aa).

This sequence belongs to the SAICAR synthetase family.

It catalyses the reaction 5-amino-1-(5-phospho-D-ribosyl)imidazole-4-carboxylate + L-aspartate + ATP = (2S)-2-[5-amino-1-(5-phospho-beta-D-ribosyl)imidazole-4-carboxamido]succinate + ADP + phosphate + 2 H(+). It functions in the pathway purine metabolism; IMP biosynthesis via de novo pathway; 5-amino-1-(5-phospho-D-ribosyl)imidazole-4-carboxamide from 5-amino-1-(5-phospho-D-ribosyl)imidazole-4-carboxylate: step 1/2. In Oceanobacillus iheyensis (strain DSM 14371 / CIP 107618 / JCM 11309 / KCTC 3954 / HTE831), this protein is Phosphoribosylaminoimidazole-succinocarboxamide synthase.